We begin with the raw amino-acid sequence, 117 residues long: Large ribosomal subunit protein bL19 (117 aa).

Belongs to the bacterial ribosomal protein bL19 family.

In terms of biological role, this protein is located at the 30S-50S ribosomal subunit interface and may play a role in the structure and function of the aminoacyl-tRNA binding site. This chain is Large ribosomal subunit protein bL19, found in Methylibium petroleiphilum (strain ATCC BAA-1232 / LMG 22953 / PM1).